Here is a 339-residue protein sequence, read N- to C-terminus: Tetracenomycin polyketide synthesis 8-O-methyl transferase TcmO (339 aa).

Residues aspartate 200 and glycine 226–phenylalanine 228 contribute to the S-adenosyl-L-methionine site. Histidine 246 serves as the catalytic Proton acceptor.

The protein belongs to the class I-like SAM-binding methyltransferase superfamily. Cation-independent O-methyltransferase family.

It participates in antibiotic biosynthesis; tetracenomycin C biosynthesis. This Streptomyces glaucescens protein is Tetracenomycin polyketide synthesis 8-O-methyl transferase TcmO (tcmO).